The following is a 238-amino-acid chain: Ribonuclease PH (238 aa).

Residues Arg-86 and 124 to 126 contribute to the phosphate site; that span reads GTR.

This sequence belongs to the RNase PH family. In terms of assembly, homohexameric ring arranged as a trimer of dimers.

It carries out the reaction tRNA(n+1) + phosphate = tRNA(n) + a ribonucleoside 5'-diphosphate. Its function is as follows. Phosphorolytic 3'-5' exoribonuclease that plays an important role in tRNA 3'-end maturation. Removes nucleotide residues following the 3'-CCA terminus of tRNAs; can also add nucleotides to the ends of RNA molecules by using nucleoside diphosphates as substrates, but this may not be physiologically important. Probably plays a role in initiation of 16S rRNA degradation (leading to ribosome degradation) during starvation. The polypeptide is Ribonuclease PH (Agrobacterium fabrum (strain C58 / ATCC 33970) (Agrobacterium tumefaciens (strain C58))).